The primary structure comprises 451 residues: CCAAT/enhancer-binding protein (451 aa).

Disordered regions lie at residues 210-236, 267-298, and 328-389; these read TYNN…EPID, QSNN…NSTN, and LKHH…AKVR. Composition is skewed to low complexity over residues 218 to 228, 268 to 298, and 334 to 350; these read ENSSVGSDSSS, SNNL…NSTN, and LQQT…QHAQ. The span at 359–370 shows a compositional bias: basic and acidic residues; that stretch reads KHVDKGTEEYRR. The 64-residue stretch at 365-428 folds into the bZIP domain; it reads TEEYRRRRER…SLHKQIYMQL (64 aa). The interval 369-398 is basic motif; it reads RRRRERNNIAVRKSREKAKVRSKEVEERVK. Residues 400–407 are leucine-zipper; that stretch reads LLKEKDAL.

It belongs to the bZIP family. C/EBP subfamily. As to quaternary structure, binds DNA as a dimer and can form stable heterodimers.

Its subcellular location is the nucleus. Its function is as follows. May be required for the expression of gene products mediating border cell migration. Among the DNA sequences that this protein binds with high affinity is a conserved site within the promoter of its gene. This Drosophila virilis (Fruit fly) protein is CCAAT/enhancer-binding protein (slbo).